Here is a 450-residue protein sequence, read N- to C-terminus: Glucose-6-phosphate isomerase (450 aa).

Phosphothreonine is present on T38. The active-site Proton donor is the E290. Active-site residues include H311 and K425.

The protein belongs to the GPI family.

It localises to the cytoplasm. It catalyses the reaction alpha-D-glucose 6-phosphate = beta-D-fructose 6-phosphate. Its pathway is carbohydrate biosynthesis; gluconeogenesis. It functions in the pathway carbohydrate degradation; glycolysis; D-glyceraldehyde 3-phosphate and glycerone phosphate from D-glucose: step 2/4. Its function is as follows. Catalyzes the reversible isomerization of glucose-6-phosphate to fructose-6-phosphate. This chain is Glucose-6-phosphate isomerase, found in Bacillus licheniformis (strain ATCC 14580 / DSM 13 / JCM 2505 / CCUG 7422 / NBRC 12200 / NCIMB 9375 / NCTC 10341 / NRRL NRS-1264 / Gibson 46).